Reading from the N-terminus, the 541-residue chain is Paromamine 6'-oxidase (541 aa).

The disordered stretch occupies residues methionine 1–tryptophan 29. Histidine 470 (proton acceptor) is an active-site residue.

Belongs to the GMC oxidoreductase family. The cofactor is FAD.

It carries out the reaction 6'''-deamino-6'''-hydroxyneomycin C + O2 = 6'''-deamino-6'''-oxoneomycin C + H2O2. The enzyme catalyses paromamine + O2 = 6'-oxoparomamine + H2O2. Its pathway is antibiotic biosynthesis; neomycin biosynthesis. In terms of biological role, glucosaminyl-6'-oxidase involved in the biosynthetic pathway of neomycin by mediating FAD-dependent dehydrogenation of paromamine to 6'-dehydro-6'-oxoparomamine. Works in combination with neamine transaminase to replace the 6-hydroxy group of paromamine with an amino group. Also able to collaborate with neomycin C transaminase to replace the 6'''-hydroxy group of 6'''-hydroxyneomycin C with an amino group. The chain is Paromamine 6'-oxidase (neoG) from Streptomyces fradiae (Streptomyces roseoflavus).